The following is a 266-amino-acid chain: Glucosamine-6-phosphate deaminase (266 aa).

The Proton acceptor; for enolization step role is filled by D72. The For ring-opening step role is filled by D141. The active-site Proton acceptor; for ring-opening step is H143. The For ring-opening step role is filled by E148.

It belongs to the glucosamine/galactosamine-6-phosphate isomerase family. NagB subfamily. Homohexamer.

The catalysed reaction is alpha-D-glucosamine 6-phosphate + H2O = beta-D-fructose 6-phosphate + NH4(+). It participates in amino-sugar metabolism; N-acetylneuraminate degradation; D-fructose 6-phosphate from N-acetylneuraminate: step 5/5. With respect to regulation, allosterically activated by N-acetylglucosamine 6-phosphate (GlcNAc6P). Catalyzes the reversible isomerization-deamination of glucosamine 6-phosphate (GlcN6P) to form fructose 6-phosphate (Fru6P) and ammonium ion. This chain is Glucosamine-6-phosphate deaminase, found in Yersinia pestis bv. Antiqua (strain Antiqua).